The sequence spans 473 residues: 3-isopropylmalate dehydratase large subunit (473 aa).

Cysteine 354, cysteine 414, and cysteine 417 together coordinate [4Fe-4S] cluster.

The protein belongs to the aconitase/IPM isomerase family. LeuC type 1 subfamily. As to quaternary structure, heterodimer of LeuC and LeuD. [4Fe-4S] cluster serves as cofactor.

The enzyme catalyses (2R,3S)-3-isopropylmalate = (2S)-2-isopropylmalate. It participates in amino-acid biosynthesis; L-leucine biosynthesis; L-leucine from 3-methyl-2-oxobutanoate: step 2/4. Catalyzes the isomerization between 2-isopropylmalate and 3-isopropylmalate, via the formation of 2-isopropylmaleate. The sequence is that of 3-isopropylmalate dehydratase large subunit from Mycobacterium ulcerans (strain Agy99).